Here is a 1039-residue protein sequence, read N- to C-terminus: FERM domain-containing protein 4A (1039 aa).

The FERM domain occupies 20 to 322 (RRCQVHLLDD…SQHQFYLDRK (303 aa)). The interval 358 to 420 (KGKIISGSSG…KLCLREAELT (63 aa)) is necessary for interaction with CYTH1. Low complexity predominate over residues 366 to 382 (SGSLLSSGSQESDSSQS). Residues 366 to 386 (SGSLLSSGSQESDSSQSAKKD) form a disordered region. A coiled-coil region spans residues 382–416 (SAKKDMLAALKSRQEALEETLRQRLEELKKLCLRE). Serine 530 carries the phosphoserine modification. The disordered stretch occupies residues 553-680 (DEDSQVTSTI…MPSTPDLRVR (128 aa)). Pro residues predominate over residues 571–586 (GLPPRPPSHNRPPPPQ). The tract at residues 579 to 939 (HNRPPPPQSL…QWYQRSTASH (361 aa)) is necessary for tight junction and adherens junction localization; Requires for interaction with PARD3. Phosphoserine is present on residues serine 604 and serine 615. Over residues 623–638 (VKKRSSHSHSSSHKRF) the composition is skewed to basic residues. 2 positions are modified to phosphoserine: serine 681 and serine 711. 2 disordered regions span residues 713–756 (ESQG…HSSS) and 772–813 (AEDS…AGGA). Residues 788–800 (RAAGALGSASSGS) are compositionally biased toward low complexity. A phosphoserine mark is found at serine 800, serine 872, and serine 901. Disordered regions lie at residues 879 to 968 (FKES…STFV) and 980 to 1039 (CKAT…STDE). Positions 896 to 905 (LTPSRSQILR) are enriched in polar residues. Over residues 912-929 (EGAHDKGAGRAAVSDELR) the composition is skewed to basic and acidic residues. Over residues 946-966 (SHTSSTSSDSGSQYSTSSQST) the composition is skewed to low complexity. Polar residues-rich tracts occupy residues 986-1000 (ALPQ…SSEI) and 1013-1023 (TWQTGEATENS).

As to quaternary structure, interacts (via coiled-coil domain) with CYTH1 (via coiled-coil domain). Interacts with PARD3 (via coiled-coil domain). Found in a complex with PARD3, CYTH1 and FRMD4A. Interacts with CYTH2. Interacts with CYTH3.

The protein resides in the cytoplasm. It localises to the cytoskeleton. The protein localises to the cell junction. It is found in the adherens junction. Its subcellular location is the tight junction. In terms of biological role, scaffolding protein that regulates epithelial cell polarity by connecting ARF6 activation with the PAR3 complex. Plays a redundant role with FRMD4B in epithelial polarization. May regulate MAPT secretion by activating ARF6-signaling. This is FERM domain-containing protein 4A from Homo sapiens (Human).